Consider the following 447-residue polypeptide: MNRHFNATRKIDPSRGATLGDGSPNDMNRVEIGPTQLAFAEWHTARLDLPDLAAMRRFRHRRLTDHVVARGYAGLLMFDPLNIRYATDSTNMQLWNTHNPFRATLLCADGYMVMWDYKNSPFLSEFNPLVREQRAGADLFYFDRGDKVDVAADVFANEVRILLRDHAPGLRRLAVDKVMLHGLRALQAQGFEIMDGEEVTEKARSVKGPDEIRAMRCASHACEVAVRKMEDFARSKVGDGVTCENDIWAILHSENVRRGGEWIETRLLASGPRSNPWFQECGPRVCQRNEIISFDTDLVGAYGICTDISRSWWIGDQKPRADMIYAMQHGVEHIRTNMEMLKPGVMIPELSANTHVLDAKFQKQKYGCLMHGVGLCDEWPLVAYPDHAVAGAYDYPLEPGMTLCVEALISEEGGDFSIKLEDQVLITEDGYENLTKYPFDPALMGVE.

The segment at 1–26 (MNRHFNATRKIDPSRGATLGDGSPND) is disordered. A divalent metal cation-binding residues include Asp295, Asp297, Asp307, His371, Glu406, and Glu421.

Belongs to the peptidase M24B family. In terms of assembly, homodimer. It depends on a divalent metal cation as a cofactor.

It carries out the reaction S,S-dimethyl-beta-propiothetin = acrylate + dimethyl sulfide + H(+). Functionally, able to cleave dimethylsulfoniopropionate (DMSP), releasing dimethyl sulfide (DMS). DMS is the principal form by which sulfur is transported from oceans to the atmosphere. The real activity of the protein is however subject to debate and it is unclear whether it constitutes a real dimethylsulfoniopropionate lyase in vivo: the low activity with DMSP as substrate suggests that DMSP is not its native substrate. The chain is Dimethylsulfoniopropionate lyase DddP from Roseobacter denitrificans (strain ATCC 33942 / OCh 114) (Erythrobacter sp. (strain OCh 114)).